A 143-amino-acid chain; its full sequence is Gastrin-releasing peptide (143 aa).

Positions 1–23 are cleaved as a signal peptide; it reads MRGPELRLVLLALVLCQAPLGPA. Met50 is subject to Methionine amide. Positions 54–143 are excised as a propeptide; it reads STGESRHVLE…GLKAKEGALS (90 aa). Positions 91–115 are disordered; the sequence is KGNSSHRSPQLKPLSTHQPTLDTED. Positions 92-111 are enriched in polar residues; the sequence is GNSSHRSPQLKPLSTHQPTL.

Belongs to the bombesin/neuromedin-B/ranatensin family.

The protein resides in the secreted. Its subcellular location is the cytoplasmic vesicle. It localises to the secretory vesicle lumen. It is found in the cell projection. The protein localises to the neuron projection. Functionally, stimulates the release of gastrin and other gastrointestinal hormones. Contributes to the perception of prurient stimuli and to the transmission of itch signals in the spinal cord that promote scratching behavior. Contributes primarily to nonhistaminergic itch sensation. In one study, shown to act in the amygdala as part of an inhibitory network which inhibits memory specifically related to learned fear. In another study, shown to act on vasoactive intestinal peptide (VIP)-expressing cells in the auditory cortex, most likely via extrasynaptic diffusion from local and long-range sources, to mediate disinhibition of glutamatergic cells via VIP cell-specific GRPR signaling which leads to enhanced auditory fear memories. Contributes to the regulation of food intake. Inhibits voltage-gated sodium channels but enhances voltage-gated potassium channels in hippocampal neurons. Induces sighing by acting directly on the pre-Botzinger complex, a cluster of several thousand neurons in the ventrolateral medulla responsible for inspiration during respiratory activity. Induces an itch response through activation of receptors present on mast cells, triggering mast cell degranulation. The protein is Gastrin-releasing peptide (GRP) of Cavia porcellus (Guinea pig).